Consider the following 662-residue polypeptide: Forkhead box protein O1 (662 aa).

Disordered regions lie at residues 1 to 62 (MAEA…PSAS) and 122 to 165 (GCLH…SRRN). At Thr-24 the chain carries Phosphothreonine; by PKB/AKT1 or PKB/AKT2 and SGK1. Positions 33-62 (SQSNSATSSPAPSGGAAANPDAAAGLPSAS) are enriched in low complexity. The span at 126-146 (PAPPQQPPPPGPLSQHPPVPP) shows a compositional bias: pro residues. A DNA-binding region (fork-head) is located at residues 167–261 (WGNLSYADLI…KSGKSPRRRA (95 aa)). 2 DNA-binding regions span residues 218-225 (NSIRHNLS) and 241-244 (SSWW). Ser-219 bears the Phosphoserine; by STK4/MST1 mark. Phosphoserine is present on residues Ser-225, Ser-241, and Ser-242. The disordered stretch occupies residues 241–342 (SSWWMLNPEG…GRLSPIMTEQ (102 aa)). An N6-acetyllysine mark is found at Lys-252 and Lys-255. Ser-256 bears the Phosphoserine; by CDK1 mark. An omega-N-methylarginine; by PRMT1 mark is found at Arg-258 and Arg-260. The Nuclear localization signal motif lies at 258-260 (RRR). At Ser-263 the chain carries Phosphoserine; by PKB/AKT1 and SGK1. Lys-269, Lys-272, and Lys-281 each carry N6-acetyllysine. Residues 271-282 (AKSRGRAAKKKA) show a composition bias toward basic residues. The tract at residues 290–570 (GAGDSPGSQF…RLTQEKTALQ (281 aa)) is sufficient for interaction with NLK. A phosphoserine mark is found at Ser-294 and Ser-305. The segment covering 316-333 (NWSTFRPRTSSNASTISG) has biased composition (polar residues). Ser-326 is modified (phosphoserine; by PKB/AKT1). A Phosphoserine; by CK1 and SGK1 modification is found at Ser-329. Ser-332 is subject to Phosphoserine; by CK1. Ser-336 bears the Phosphoserine; by DYRK1A mark. Thr-340 bears the Phosphothreonine mark. Positions 370-466 (SEISNPENME…GGMAQYNCAA (97 aa)) are required for interaction with RUNX2. Lys-430 carries the N6-acetyllysine modification. Positions 469-473 (LKELL) match the Required for interaction with SIRT1 motif.

In terms of assembly, interacts with LRPPRC. Interacts with RUNX2; the interaction inhibits RUNX2 transcriptional activity and mediates the IGF1/insulin-dependent BGLAP expression in osteoblasts Interacts with PPP2R1A; the interaction regulates the dephosphorylation of FOXO1 at Thr-24 and Ser-263 leading to its nuclear import. Interacts with NLK. Interacts with SIRT1; the interaction results in the deacetylation of FOXO1 leading to activation of FOXO1-mediated transcription of genes involved in DNA repair and stress resistance. Binds to CDK1. Interacts with the 14-3-3 proteins, YWHAG and YWHAZ; the interactions require insulin-stimulated phosphorylation on Thr-24, promote nuclear exit and loss of transcriptional activity. Interacts with SKP2; the interaction ubiquitinates FOXO1 leading to its proteasomal degradation. The interaction requires the presence of KRIT1. Interacts (via the C-terminal half) with ATF4 (via its DNA binding domain); the interaction occurs in osteoblasts, regulates glucose homeostasis via suppression of beta-cell proliferation and subsequent decrease in insulin production. Interacts with PRMT1; the interaction methylates FOXO1, prevents PKB/AKT1 phosphorylation and retains FOXO1 in the nucleus. Interacts with EP300 and CREBBP; the interactions acetylate FOXO1. Interacts with SIRT2; the interaction is disrupted in response to oxidative stress or serum deprivation, leading to increased level of acetylated FOXO1, which promotes stress-induced autophagy by stimulating E1-like activating enzyme ATG7. Interacts (acetylated form) with ATG7; the interaction is increased in response to oxidative stress or serum deprivation and promotes the autophagic process leading to cell death. Interacts (acetylated form) with PPARG. Interacts with XBP1; this interaction is direct and leads to FOXO1 ubiquitination and degradation via the proteasome pathway. Interacts (via the Fork-head domain) with CEBPA; the interaction increases when FOXO1 is deacetylated. Interacts with WDFY2. Forms a complex with WDFY2 and AKT1. Interacts with CRY1. Interacts with PPIA/CYPA; the interaction promotes FOXO1 dephosphorylation, nuclear accumulation and transcriptional activity. Interacts with TOX4; FOXO1 is required for full induction of TOX4-dependent activity and the interaction is inhibited by insulin. Interacts (when phosphorylated on Ser-263) with STUB1/CHIP. Post-translationally, phosphorylation by NLK promotes nuclear export and inhibits the transcriptional activity. In response to growth factors, phosphorylation on Thr-24, Ser-263 and Ser-326 by PKB/AKT1 promotes nuclear export and inactivation of transactivational activity. Phosphorylation on Thr-24 is required for binding 14-3-3 proteins. Phosphorylation of Ser-263 decreases DNA-binding activity and promotes the phosphorylation of Thr-24 and Ser-326, permitting phosphorylation of Ser-329 and Ser-332, probably by CDK1, leading to nuclear exclusion and loss of function. Stress signals, such as response to oxygen or nitric oxide, attenuate the PKB/AKT1-mediated phosphorylation leading to nuclear retention. Phosphorylation of Ser-336 is independent of IGF1 and leads to reduced function. Dephosphorylated on Thr-24 and Ser-263 by PP2A in beta-cells under oxidative stress leading to nuclear retention. Phosphorylation of Ser-256 by CDK1 disrupts binding of 14-3-3 proteins leading to nuclear accumulation and has no effect on DNA binding nor transcriptional activity. Phosphorylation by STK4/MST1 on Ser-219, upon oxidative stress, inhibits binding to 14-3-3 proteins and nuclear export. PPIA/CYPA promotes its dephosphorylation on Ser-263. Ubiquitinated by SKP2. Ubiquitination leads to proteasomal degradation. Ubiquitinated by STUB1/CHIP; when Ser-263 is phosphorylated. In terms of processing, methylation inhibits AKT1-mediated phosphorylation at Ser-263 and is increased by oxidative stress. Post-translationally, acetylated. Acetylation at Lys-269 and Lys-281 are necessary for autophagic cell death induction. Deacetylated by SIRT2 in response to oxidative stress or serum deprivation, thereby negatively regulating FOXO1-mediated autophagic cell death. Once in the nucleus, acetylated by CREBBP/EP300. Acetylation diminishes the interaction with target DNA and attenuates the transcriptional activity. It increases the phosphorylation at Ser-263. Deacetylation by SIRT1 results in reactivation of the transcriptional activity. Oxidative stress by hydrogen peroxide treatment appears to promote deacetylation and uncoupling of insulin-induced phosphorylation. By contrast, resveratrol acts independently of acetylation. Acetylated at Lys-430, promoting its localization to the nucleus and transcription factor activity. Deacetylation at Lys-430 by SIRT6, promotes its translocation into the cytoplasm, preventing its transcription factor activity. Deacetylation and subsequent inhibition by SIRT6 has different effects depending on cell types: it inhibits gluconeogenesis in hepatocytes, promotes glucose sensing in pancreatic beta-cells and regulates lipid catabolism in brown adipocytes. In terms of tissue distribution, highly in subcutaneous adipose and visceral adipose tissues. Levels higher in piglets than in adults. Also expressed at lower levels in liver and muscle.

The protein localises to the cytoplasm. The protein resides in the nucleus. Functionally, transcription factor that is the main target of insulin signaling and regulates metabolic homeostasis in response to oxidative stress. Binds to the insulin response element (IRE) with consensus sequence 5'-TT[G/A]TTTTG-3' and the related Daf-16 family binding element (DBE) with consensus sequence 5'-TT[G/A]TTTAC-3'. Activity suppressed by insulin. Main regulator of redox balance and osteoblast numbers and controls bone mass. Orchestrates the endocrine function of the skeleton in regulating glucose metabolism. Also acts as a key regulator of chondrogenic commitment of skeletal progenitor cells in response to lipid availability: when lipids levels are low, translocates to the nucleus and promotes expression of SOX9, which induces chondrogenic commitment and suppresses fatty acid oxidation. Acts synergistically with ATF4 to suppress osteocalcin/BGLAP activity, increasing glucose levels and triggering glucose intolerance and insulin insensitivity. Also suppresses the transcriptional activity of RUNX2, an upstream activator of osteocalcin/BGLAP. Acts as an inhibitor of glucose sensing in pancreatic beta cells by acting as a transcription repressor and suppressing expression of PDX1. In hepatocytes, promotes gluconeogenesis by acting together with PPARGC1A and CEBPA to activate the expression of genes such as IGFBP1, G6PC1 and PCK1. Also promotes gluconeogenesis by directly promoting expression of PPARGC1A and G6PC1. Important regulator of cell death acting downstream of CDK1, PKB/AKT1 and STK4/MST1. Promotes neural cell death. Mediates insulin action on adipose tissue. Regulates the expression of adipogenic genes such as PPARG during preadipocyte differentiation and, adipocyte size and adipose tissue-specific gene expression in response to excessive calorie intake. Regulates the transcriptional activity of GADD45A and repair of nitric oxide-damaged DNA in beta-cells. Required for the autophagic cell death induction in response to starvation or oxidative stress in a transcription-independent manner. Mediates the function of MLIP in cardiomyocytes hypertrophy and cardiac remodeling. Positive regulator of apoptosis in cardiac smooth muscle cells as a result of its transcriptional activation of pro-apoptotic genes. Regulates endothelial cell (EC) viability and apoptosis in a PPIA/CYPA-dependent manner via transcription of CCL2 and BCL2L11 which are involved in EC chemotaxis and apoptosis. The polypeptide is Forkhead box protein O1 (FOXO1) (Sus scrofa (Pig)).